A 201-amino-acid polypeptide reads, in one-letter code: Protease (201 aa).

Residues His-55, Asp-72, and Cys-122 contribute to the active site.

The protein belongs to the peptidase C5 family. In terms of assembly, interacts with protease cofactor pVI-C; this interaction is necessary for protease activation.

The protein resides in the virion. Its subcellular location is the host nucleus. It catalyses the reaction Cleaves proteins of the adenovirus and its host cell at two consensus sites: -Yaa-Xaa-Gly-Gly-|-Xaa- and -Yaa-Xaa-Gly-Xaa-|-Gly- (in which Yaa is Met, Ile or Leu, and Xaa is any amino acid).. With respect to regulation, requires DNA and protease cofactor for maximal activation. Inside nascent virions, becomes partially activated by binding to the viral DNA, allowing it to cleave the cofactor that binds to the protease and fully activates it. Actin, like the viral protease cofactor, seems to act as a cofactor in the cleavage of cytokeratin 18 and of actin itself. Functionally, cleaves viral precursor proteins (pTP, pIIIa, pVI, pVII, pVIII, and pX) inside newly assembled particles giving rise to mature virions. Protease complexed to its cofactor slides along the viral DNA to specifically locate and cleave the viral precursors. Mature virions have a weakened organization compared to the unmature virions, thereby facilitating subsequent uncoating. Without maturation, the particle lacks infectivity and is unable to uncoat. Late in adenovirus infection, in the cytoplasm, may participate in the cytoskeleton destruction. Cleaves host cell cytoskeletal keratins K7 and K18. This chain is Protease, found in Pantherophis guttatus (Corn snake).